The sequence spans 74 residues: UPF0057 membrane protein At4g30660 (74 aa).

2 helical membrane passes run 4-24 (NCEI…GVCF) and 37-57 (LVLT…VIVF).

This sequence belongs to the UPF0057 (PMP3) family.

Its subcellular location is the membrane. This is UPF0057 membrane protein At4g30660 from Arabidopsis thaliana (Mouse-ear cress).